The following is a 440-amino-acid chain: C4-dicarboxylate transport protein (440 aa).

9 consecutive transmembrane segments (helical) span residues 15-35 (VLVA…TGVA), 46-66 (LIKM…IAGM), 78-98 (YALL…LVVV), 146-166 (AFAN…GFAL), 190-210 (IINM…AFTI), 224-244 (LMAC…GGIC), 291-311 (VVGL…SIYL), 332-352 (ITLL…TGSG), and 354-374 (IVLA…LALI). The disordered stretch occupies residues 419–440 (GGSPLVDTRPTDDLGVAEGPAR).

Belongs to the dicarboxylate/amino acid:cation symporter (DAACS) (TC 2.A.23) family.

The protein localises to the cell inner membrane. Its function is as follows. Responsible for the transport of dicarboxylates such as succinate, fumarate, and malate from the periplasm across the membrane. The polypeptide is C4-dicarboxylate transport protein (Pseudomonas entomophila (strain L48)).